Consider the following 88-residue polypeptide: Hemotin (88 aa).

Over 1-14 (MDCFKVFEVVFQSE) the chain is Lumenal. Residues 15–37 (INPLLLIPAVATIALTLCCYCYH) traverse the membrane as a helical segment. Residues 38 to 88 (GYQWIRDRRTARIEEQQAQLPLPLSRISITPGCSMVATTKLTHSRNSVDIY) are Cytoplasmic-facing.

As to quaternary structure, interacts with 14-3-3zeta. In terms of tissue distribution, expressed in hemocytes.

The protein resides in the early endosome membrane. In terms of biological role, negatively regulates early endosome maturation by binding to and repressing the activity of 14-3-3zeta which prevents the 14-3-3zeta-mediated activation of phosphoinositide 3-kinase Pi3K68D. This, in turn, inhibits the Pi3K68D-mediated conversion of phosphatidylinositol to phosphatidylinositol-3-phosphate and prevents progression of early endosomes through the maturation process which regulates subsequent steps of phagocytic processing. This Drosophila melanogaster (Fruit fly) protein is Hemotin.